A 356-amino-acid polypeptide reads, in one-letter code: Arginine kinase Scy s 2 (356 aa).

Residues 9–91 (KLEEGFKKLE…FDPIIEDYHK (83 aa)) form the Phosphagen kinase N-terminal domain. L-arginine is bound at residue 64 to 68 (GVGVY). A Phosphagen kinase C-terminal domain is found at 119 to 356 (FVISTRVRCG…LELIKMEKEM (238 aa)). ATP-binding positions include 122 to 126 (STRVR) and His185. Glu225 serves as a coordination point for L-arginine. Arg229 lines the ATP pocket. Residue Cys271 participates in L-arginine binding. ATP is bound by residues 280–284 (RASVH) and 309–314 (RGTRGE). Residue Glu314 participates in L-arginine binding.

This sequence belongs to the ATP:guanido phosphotransferase family. Muscle (at protein level).

It catalyses the reaction L-arginine + ATP = N(omega)-phospho-L-arginine + ADP + H(+). In terms of biological role, catalyzes the reversible transfer of high energy ATP gamma-phosphate group to L-arginine. This Scylla serrata (Mud crab) protein is Arginine kinase Scy s 2.